A 938-amino-acid polypeptide reads, in one-letter code: AP-2 complex subunit alpha-2 (938 aa).

A 1,2-diacyl-sn-glycero-3-phospho-(1D-myo-inositol-3,4,5-trisphosphate) is bound by residues 11–12, Lys-43, Tyr-53, and 57–61; these read RG and KYVCK. A disordered region spans residues 616-677; the sequence is LKKKKGPSTV…APPVPAGPPP (62 aa). Residues 645–668 show a composition bias toward low complexity; it reads PALASTSAVSTPSPSADLLGLGAA.

It belongs to the adaptor complexes large subunit family. In terms of assembly, adaptor protein complex 2 (AP-2) is a heterotetramer composed of two large adaptins (alpha-type subunit AP2A1 or AP2A2 and beta-type subunit AP2B1), a medium adaptin (mu-type subunit AP2M1) and a small adaptin (sigma-type subunit AP2S1). Binds clathrin. Binds EPN1, EPS15, AMPH, SNAP91 and BIN1. Interacts with HIP1. Interacts with DGKD. Interacts with DENND1A, DENND1B and DENND1C. Interacts with FCHO1. Interacts with ATAT1; this interaction is required for efficient alpha-tubulin acetylation by ATAT1. Interacts with KIAA1107. Together with AP2B1 and AP2M1, it interacts with ADAM10; this interaction facilitates ADAM10 endocytosis from the plasma membrane during long-term potentiation in hippocampal neurons. Interacts with CLN3 (via dileucine motif). Interacts with ABCB11; this interaction regulates cell membrane expression of ABCB11 through its internalization in a clathrin-dependent manner and its subsequent degradation. Interacts with DNAJC6.

It localises to the cell membrane. It is found in the membrane. Its subcellular location is the coated pit. Its function is as follows. Component of the adaptor protein complex 2 (AP-2). Adaptor protein complexes function in protein transport via transport vesicles in different membrane traffic pathways. Adaptor protein complexes are vesicle coat components and appear to be involved in cargo selection and vesicle formation. AP-2 is involved in clathrin-dependent endocytosis in which cargo proteins are incorporated into vesicles surrounded by clathrin (clathrin-coated vesicles, CCVs) which are destined for fusion with the early endosome. The clathrin lattice serves as a mechanical scaffold but is itself unable to bind directly to membrane components. Clathrin-associated adaptor protein (AP) complexes which can bind directly to both the clathrin lattice and to the lipid and protein components of membranes are considered to be the major clathrin adaptors contributing the CCV formation. AP-2 also serves as a cargo receptor to selectively sort the membrane proteins involved in receptor-mediated endocytosis. AP-2 seems to play a role in the recycling of synaptic vesicle membranes from the presynaptic surface. AP-2 recognizes Y-X-X-[FILMV] (Y-X-X-Phi) and [ED]-X-X-X-L-[LI] endocytosis signal motifs within the cytosolic tails of transmembrane cargo molecules. AP-2 may also play a role in maintaining normal post-endocytic trafficking through the ARF6-regulated, non-clathrin pathway. During long-term potentiation in hippocampal neurons, AP-2 is responsible for the endocytosis of ADAM10. The AP-2 alpha subunit binds polyphosphoinositide-containing lipids, positioning AP-2 on the membrane. The AP-2 alpha subunit acts via its C-terminal appendage domain as a scaffolding platform for endocytic accessory proteins. The AP-2 alpha and AP-2 sigma subunits are thought to contribute to the recognition of the [ED]-X-X-X-L-[LI] motif. The chain is AP-2 complex subunit alpha-2 from Bos taurus (Bovine).